The chain runs to 76 residues: uncharacterized protein (76 aa).

It is found in the plastid. This is an uncharacterized protein from Euglena longa (Euglenophycean alga).